A 120-amino-acid polypeptide reads, in one-letter code: Large ribosomal subunit protein bL12 (120 aa).

It belongs to the bacterial ribosomal protein bL12 family. As to quaternary structure, homodimer. Part of the ribosomal stalk of the 50S ribosomal subunit. Forms a multimeric L10(L12)X complex, where L10 forms an elongated spine to which 2 to 4 L12 dimers bind in a sequential fashion. Binds GTP-bound translation factors.

Its function is as follows. Forms part of the ribosomal stalk which helps the ribosome interact with GTP-bound translation factors. Is thus essential for accurate translation. The polypeptide is Large ribosomal subunit protein bL12 (Listeria innocua serovar 6a (strain ATCC BAA-680 / CLIP 11262)).